A 292-amino-acid polypeptide reads, in one-letter code: Ribosomal protein L11 methyltransferase (292 aa).

T136, G159, D181, and N228 together coordinate S-adenosyl-L-methionine.

Belongs to the methyltransferase superfamily. PrmA family.

It is found in the cytoplasm. It catalyses the reaction L-lysyl-[protein] + 3 S-adenosyl-L-methionine = N(6),N(6),N(6)-trimethyl-L-lysyl-[protein] + 3 S-adenosyl-L-homocysteine + 3 H(+). In terms of biological role, methylates ribosomal protein L11. This Rhizobium etli (strain CIAT 652) protein is Ribosomal protein L11 methyltransferase.